The primary structure comprises 955 residues: MTAQAPLSVAPFLQTPACPSEAPGAVLPFSLNYSRYVQRLAQARAGWAERVQAAAAGPISVAWLSARFGELFEAAAAEPEQALKRALRLLRNEVFAALAERDLSGAATLDEVTGAMTDFAEFAVRAAIAVIGQELGALHGQPVGQSSGEVQELVVVGMGKLGGRELNVSSDIDLIFLYDEEGDTQGGPRPLSNHEYFTKLGRRLINALADVTEDGYVFRVDMRLRPNGDAGPLACSLGMLEEYFVVQGREWERYAWIKGRVITDPGSPHAARVIQQLERVTTPFVFRRYLDYGVIAAIRALHAQIRAEAAKRSNAANRQHGGHDSQVQAHAPNIKLGRGGIREIEFVAQVFQLIRGGQDFGLRIRPTLEVLRAAAERGLIGADAVARLTDAYRFLRQLEHRLQYVDDAQTHNLPGAPEDQLRIARMMGFADYAALVAQLERYQDEVAQQFEQTFSDKQDNQPPCAAIWHADLLDDERTESARAQLLELGYADADSVLERLRASRHSPRYRALSEVSRQRFDLLINRALDHAARQTDADVTIARFLDFFDAISRRSSYLSLLSEYPQAMARVAHTLHASRWAADYLTRHPQLLDELLDTEALSAAPDWQGFRERVRERLRAAGDHVEMQMDILRQEHHAETFRILLQDLQGMLTVEPISDRLSDLADAVLDLTLETVWQQVSTRHREVPRFAVVAYGRLGGKELGYASDLDLIFLYDDDDERAPEVYAAYARKLITWLTSHTAAGMLFDVDTRLRPNGAAGLMVTHFEAFRRYQMREGDNAAWVWEHQALTRARFCAGDPEIGARFEALRIAVLRQPREAGPLRDEIAAMRERVLEGHANPTPLFDLKHDRGGMVDIEFTVQFLVLLHSAAYAELTRNAGNIALLRMAGELGLIDAARAARVADAYRDFRARQHKLRLDGQSAARVPAGTCAHEAAHVRALWEQVFGSIDAASPTP.

The interval 1–458 is adenylyl removase; it reads MTAQAPLSVA…QFEQTFSDKQ (458 aa). Residues 464-955 form an adenylyl transferase region; it reads CAAIWHADLL…GSIDAASPTP (492 aa).

This sequence belongs to the GlnE family. Mg(2+) is required as a cofactor.

The catalysed reaction is [glutamine synthetase]-O(4)-(5'-adenylyl)-L-tyrosine + phosphate = [glutamine synthetase]-L-tyrosine + ADP. It carries out the reaction [glutamine synthetase]-L-tyrosine + ATP = [glutamine synthetase]-O(4)-(5'-adenylyl)-L-tyrosine + diphosphate. Functionally, involved in the regulation of glutamine synthetase GlnA, a key enzyme in the process to assimilate ammonia. When cellular nitrogen levels are high, the C-terminal adenylyl transferase (AT) inactivates GlnA by covalent transfer of an adenylyl group from ATP to specific tyrosine residue of GlnA, thus reducing its activity. Conversely, when nitrogen levels are low, the N-terminal adenylyl removase (AR) activates GlnA by removing the adenylyl group by phosphorolysis, increasing its activity. The regulatory region of GlnE binds the signal transduction protein PII (GlnB) which indicates the nitrogen status of the cell. This chain is Bifunctional glutamine synthetase adenylyltransferase/adenylyl-removing enzyme, found in Ralstonia nicotianae (strain ATCC BAA-1114 / GMI1000) (Ralstonia solanacearum).